The following is a 284-amino-acid chain: Tropomyosin (284 aa).

The stretch at 1-284 forms a coiled coil; it reads MDAIKKKMQA…DQTFQELSGY (284 aa). Residues 110 to 142 show a composition bias toward basic and acidic residues; that stretch reads TAKLEEATHTADESERVRKVMENRSFQDEERAN. The disordered stretch occupies residues 110-143; the sequence is TAKLEEATHTADESERVRKVMENRSFQDEERANT.

The protein belongs to the tropomyosin family.

Its function is as follows. Tropomyosin, in association with the troponin complex, plays a central role in the calcium dependent regulation of muscle contraction. The protein is Tropomyosin of Anisakis simplex (Herring worm).